Here is a 133-residue protein sequence, read N- to C-terminus: CDGSH iron-sulfur domain protein (133 aa).

Topologically, residues 1–35 (MEPISHLVKSSLPNYLSSLPVPDSIGGWFKLSFKD) are lumenal. A helical membrane pass occupies residues 36–58 (WLALIPPTVVVAGLGYTAYLAYC). Residues 59–133 (PAARASCAAK…DNVGPIVIKK (75 aa)) lie on the Cytoplasmic side of the membrane. Residues Cys-100, Cys-102, Cys-111, and His-115 each coordinate [2Fe-2S] cluster.

This sequence belongs to the CISD protein family. CISD2 subfamily. Requires [2Fe-2S] cluster as cofactor.

The protein resides in the endoplasmic reticulum membrane. The polypeptide is CDGSH iron-sulfur domain protein (Drosophila melanogaster (Fruit fly)).